A 205-amino-acid polypeptide reads, in one-letter code: LIM domain-containing protein PLIM2b (205 aa).

LIM zinc-binding domains follow at residues 8 to 68 (DKCN…LFKE) and 102 to 162 (DKCA…LFME). Residues 177-205 (RTASGNTLPPEPTEDVAVEAKEENGVSES) form a disordered region. A compositionally biased stretch (basic and acidic residues) spans 194–205 (VEAKEENGVSES).

Interacts with F-actin. Predominantly expressed in flowers and in pollen grains. Detected in vasculature and roots.

The protein resides in the cytoplasm. Its subcellular location is the cytoskeleton. Its function is as follows. Binds to actin filaments and promotes cross-linking into thick bundles. Has an actin-stabilizing activity. The actin regulatory activities are inhibited by pH &gt; 6.8 but are [Ca(2+)] independent. The protein is LIM domain-containing protein PLIM2b of Arabidopsis thaliana (Mouse-ear cress).